We begin with the raw amino-acid sequence, 326 residues long: Lipoyl synthase (326 aa).

Residues cysteine 56, cysteine 61, cysteine 67, cysteine 82, cysteine 86, cysteine 89, and serine 298 each coordinate [4Fe-4S] cluster. In terms of domain architecture, Radical SAM core spans 68 to 287 (WEDREATFLI…KDEADAIGYS (220 aa)).

Belongs to the radical SAM superfamily. Lipoyl synthase family. It depends on [4Fe-4S] cluster as a cofactor.

It is found in the cytoplasm. The catalysed reaction is [[Fe-S] cluster scaffold protein carrying a second [4Fe-4S](2+) cluster] + N(6)-octanoyl-L-lysyl-[protein] + 2 oxidized [2Fe-2S]-[ferredoxin] + 2 S-adenosyl-L-methionine + 4 H(+) = [[Fe-S] cluster scaffold protein] + N(6)-[(R)-dihydrolipoyl]-L-lysyl-[protein] + 4 Fe(3+) + 2 hydrogen sulfide + 2 5'-deoxyadenosine + 2 L-methionine + 2 reduced [2Fe-2S]-[ferredoxin]. It participates in protein modification; protein lipoylation via endogenous pathway; protein N(6)-(lipoyl)lysine from octanoyl-[acyl-carrier-protein]: step 2/2. Its function is as follows. Catalyzes the radical-mediated insertion of two sulfur atoms into the C-6 and C-8 positions of the octanoyl moiety bound to the lipoyl domains of lipoate-dependent enzymes, thereby converting the octanoylated domains into lipoylated derivatives. This is Lipoyl synthase from Streptomyces griseus subsp. griseus (strain JCM 4626 / CBS 651.72 / NBRC 13350 / KCC S-0626 / ISP 5235).